Reading from the N-terminus, the 556-residue chain is Glypican-4 (556 aa).

The signal sequence occupies residues 1 to 18 (MARFGLPALLCTLAVLSA). Serine 357 is subject to Phosphoserine. Residues serine 494, serine 498, and serine 500 are each glycosylated (O-linked (Xyl...) (glycosaminoglycan) serine). A glycan (N-linked (GlcNAc...) asparagine) is linked at asparagine 514. Residue serine 529 is the site of GPI-anchor amidated serine attachment. Residues 530-556 (AGVRPGAQAYLLTVFCILFLVMQREWR) constitute a propeptide, removed in mature form.

It belongs to the glypican family.

It is found in the cell membrane. The protein localises to the secreted. It localises to the extracellular space. Its function is as follows. Cell surface proteoglycan that bears heparan sulfate. May be involved in the development of kidney tubules and of the central nervous system. The chain is Glypican-4 (GPC4) from Homo sapiens (Human).